Reading from the N-terminus, the 364-residue chain is Ribosomal RNA large subunit methyltransferase F (364 aa).

The segment at 1–28 (MTNKRKSAKPLEPAKRTPKLRTKKSRDL) is disordered.

Belongs to the methyltransferase superfamily. METTL16/RlmF family.

The protein resides in the cytoplasm. The enzyme catalyses adenosine(1618) in 23S rRNA + S-adenosyl-L-methionine = N(6)-methyladenosine(1618) in 23S rRNA + S-adenosyl-L-homocysteine + H(+). In terms of biological role, specifically methylates the adenine in position 1618 of 23S rRNA. This chain is Ribosomal RNA large subunit methyltransferase F, found in Vibrio vulnificus (strain YJ016).